A 571-amino-acid polypeptide reads, in one-letter code: Proline--tRNA ligase (571 aa).

The protein belongs to the class-II aminoacyl-tRNA synthetase family. ProS type 1 subfamily. Homodimer.

It is found in the cytoplasm. It carries out the reaction tRNA(Pro) + L-proline + ATP = L-prolyl-tRNA(Pro) + AMP + diphosphate. Functionally, catalyzes the attachment of proline to tRNA(Pro) in a two-step reaction: proline is first activated by ATP to form Pro-AMP and then transferred to the acceptor end of tRNA(Pro). As ProRS can inadvertently accommodate and process non-cognate amino acids such as alanine and cysteine, to avoid such errors it has two additional distinct editing activities against alanine. One activity is designated as 'pretransfer' editing and involves the tRNA(Pro)-independent hydrolysis of activated Ala-AMP. The other activity is designated 'posttransfer' editing and involves deacylation of mischarged Ala-tRNA(Pro). The misacylated Cys-tRNA(Pro) is not edited by ProRS. This chain is Proline--tRNA ligase, found in Pseudomonas putida (strain GB-1).